The following is an 880-amino-acid chain: MNFQFYFLIKHNFISCKLETPLQLLLTTYVNLLKHKKNIIPLNVDKARDVYRAHENSYFLDHYIRSNQATCITQRPSVKLGEWVQKGDFLCDTTASSAGELALGKNILVAYMPWHGYNFEDAILVNETLIIYDIYTSLHLEKFEIEIENTNWGPEIIKLSDWMFSDKRDSLYGKELFTQETTKQTYVKEKQITIGVLKQAFLRRKGKLLINRRFISKIHKYEFLTNQRFVVPQFRYQQTLFQQINKNPKKQLISRSIIENSNQLSIYNKPKIRFTNNVISSKLFKPLIIFSQVTLLNILSQCHIDKSQYQPTSELLSSKLVAKEQIHELLFKQPKKTGVKIKLKHGTSHTTDFYNKDLLSNTKMRAGGENHRPGESKIYLGSKASVKFINMNFQEKKTNGYKKISLYNNKTSSQNNVNKKSFFLFLNKSILFLNKPRPKYKSTRPVNVSLNKSAFIYRRSFRTLFPYNFKNMRLSCEKLFVNNNNWLINYIKSLDVVIGGEIYRPGNKLQINLEYLNFKYGFVQKNNYDHLDNDGIIKLGTWVKPGDIIVSKLRPIGPHNPTPLEKLVAAILKKKFDDYKNAAFYTPKDVYGRIVGIEILEPKNLPSDVEYSGIGRVEFYLVDKRRIFVGDKMAGRHGNKGIISNILPKQDMPYLPDGTPVDMVLNPLGVPSRMNVGQVFETLLGLAGKYLHQHFKVTPFDEVYGPEASRSLVYSKLYEARLKTDQNWIFDPKSPGKTRIFDGQTGANFDQAVTAGYAYMLKLIHLVDHKIHARSTGPYALVTQQPVRGRSRAGGQRLGEMEFWALEAFGASYNLQEMMTIKSDDILGRTQVFDSILNSKPIQNSHPESFRVFINELRSLGVNFQSQILHQYNPNIKTKI.

It belongs to the RNA polymerase beta chain family. As to quaternary structure, in plastids the minimal PEP RNA polymerase catalytic core is composed of four subunits: alpha, beta, beta', and beta''. When a (nuclear-encoded) sigma factor is associated with the core the holoenzyme is formed, which can initiate transcription.

The protein resides in the plastid. It is found in the chloroplast. It carries out the reaction RNA(n) + a ribonucleoside 5'-triphosphate = RNA(n+1) + diphosphate. In terms of biological role, DNA-dependent RNA polymerase catalyzes the transcription of DNA into RNA using the four ribonucleoside triphosphates as substrates. The chain is DNA-directed RNA polymerase subunit beta C-terminal section (rpoB2) from Pleurastrum terricola (Filamentous green alga).